The following is a 152-amino-acid chain: CASP-like protein 5B3 (152 aa).

Residues 1–21 (MIDIPGTPGTLTGLVLRISQC) are Cytoplasmic-facing. 2 helical membrane-spanning segments follow: residues 22 to 42 (VFAA…SFTA) and 43 to 63 (FCYL…LAIL). At 64–77 (DTFALVRKKTLLSP) the chain is on the extracellular side. The chain crosses the membrane as a helical span at residues 78–98 (VLVSLFVVGDWVTSTLSLAGA). The Cytoplasmic portion of the chain corresponds to 99–127 (SSSAGITVLYFGDLGSCSFEAECWKYQLS). A helical transmembrane segment spans residues 128–148 (VALAFLCWITIAVSSLTTLWL). Topologically, residues 149–152 (LASA) are extracellular.

Belongs to the Casparian strip membrane proteins (CASP) family. In terms of assembly, homodimer and heterodimers. Expressed in the stele of the root and in leaves.

The protein localises to the cell membrane. This chain is CASP-like protein 5B3, found in Arabidopsis thaliana (Mouse-ear cress).